The chain runs to 284 residues: Bifunctional protein FolD (284 aa).

NADP(+) contacts are provided by residues 165–167 (GAS), serine 190, and isoleucine 231.

Belongs to the tetrahydrofolate dehydrogenase/cyclohydrolase family. As to quaternary structure, homodimer.

The enzyme catalyses (6R)-5,10-methylene-5,6,7,8-tetrahydrofolate + NADP(+) = (6R)-5,10-methenyltetrahydrofolate + NADPH. The catalysed reaction is (6R)-5,10-methenyltetrahydrofolate + H2O = (6R)-10-formyltetrahydrofolate + H(+). It functions in the pathway one-carbon metabolism; tetrahydrofolate interconversion. Its function is as follows. Catalyzes the oxidation of 5,10-methylenetetrahydrofolate to 5,10-methenyltetrahydrofolate and then the hydrolysis of 5,10-methenyltetrahydrofolate to 10-formyltetrahydrofolate. In Bordetella avium (strain 197N), this protein is Bifunctional protein FolD.